A 528-amino-acid chain; its full sequence is Xylose import ATP-binding protein XylG (528 aa).

2 consecutive ABC transporter domains span residues 6-245 (LQMN…VGRE) and 262-507 (FEAR…LSHP). 38 to 45 (GENGAGKS) is a binding site for ATP. The disordered stretch occupies residues 504–528 (LSHPGDPDSNDPANNNHNDNDRKTT).

Belongs to the ABC transporter superfamily. Xylose importer (TC 3.A.1.2.4) family. As to quaternary structure, the complex is composed of two ATP-binding proteins (XylG), two transmembrane proteins (XylH) and a solute-binding protein (XylF).

The protein localises to the cell inner membrane. It catalyses the reaction D-xylose(out) + ATP + H2O = D-xylose(in) + ADP + phosphate + H(+). In terms of biological role, part of the ABC transporter complex XylFGH involved in xylose import. Responsible for energy coupling to the transport system. In Pseudomonas syringae pv. tomato (strain ATCC BAA-871 / DC3000), this protein is Xylose import ATP-binding protein XylG.